A 47-amino-acid chain; its full sequence is Large ribosomal subunit protein bL34 (47 aa).

Belongs to the bacterial ribosomal protein bL34 family.

The sequence is that of Large ribosomal subunit protein bL34 from Corynebacterium jeikeium (strain K411).